Consider the following 236-residue polypeptide: 2,3,4,5-tetrahydropyridine-2,6-dicarboxylate N-acetyltransferase (236 aa).

The protein belongs to the transferase hexapeptide repeat family. DapH subfamily.

It catalyses the reaction (S)-2,3,4,5-tetrahydrodipicolinate + acetyl-CoA + H2O = L-2-acetamido-6-oxoheptanedioate + CoA. Its pathway is amino-acid biosynthesis; L-lysine biosynthesis via DAP pathway; LL-2,6-diaminopimelate from (S)-tetrahydrodipicolinate (acetylase route): step 1/3. Functionally, catalyzes the transfer of an acetyl group from acetyl-CoA to tetrahydrodipicolinate. This chain is 2,3,4,5-tetrahydropyridine-2,6-dicarboxylate N-acetyltransferase, found in Geobacillus thermodenitrificans (strain NG80-2).